Consider the following 178-residue polypeptide: Deoxycytidylate deaminase (178 aa).

The CMP/dCMP-type deaminase domain occupies 14–145 (EWPEYFMAVA…DEATAARLLF (132 aa)). Histidine 84 is a Zn(2+) binding site. Catalysis depends on glutamate 86, which acts as the Proton donor. Positions 110 and 113 each coordinate Zn(2+). Position 174 is a phosphoserine (serine 174).

The protein belongs to the cytidine and deoxycytidylate deaminase family. Homohexamer. Zn(2+) is required as a cofactor.

It carries out the reaction dCMP + H2O + H(+) = dUMP + NH4(+). The enzyme catalyses 5-hydroxymethyl-dCMP + H2O + H(+) = 5-hydroxymethyl-dUMP + NH4(+). Its activity is regulated as follows. Allosteric enzyme whose activity is greatly influenced by the end products of its metabolic pathway, dCTP and dTTP. In terms of biological role, catalyzes the deamination of dCMP to dUMP, providing the nucleoside monophosphate substrate for the thymidylate synthase/TYMS. Also, part of a nucleotide salvage pathway that eliminates epigenetically modified 5-hydroxymethyl-dCMP (hmdCMP) in a two-step process entailing deamination to cytotoxic 5-hydroxymethyl-dUMP (hmdUMP), followed by its hydrolysis into 5-hydroxymethyluracil (hmU) and 2-deoxy-D-ribose 5-phosphate (deoxyribosephosphate). Catalyzes the first step in that pathway, the deamination of 5-hydroxymethyl-dCMP (hmdCMP). This is Deoxycytidylate deaminase from Homo sapiens (Human).